Reading from the N-terminus, the 2169-residue chain is Protein sidekick-1 (2169 aa).

A signal peptide spans 1–50; it reads MVGRKVDREIIARRNSRRDGMMMKLNFCFFFCRRWWAFLLLQLHMLQALA. Residues 51–1961 lie on the Extracellular side of the membrane; sequence QDDVAPYFKT…TEAPFYEEWW (1911 aa). Ig-like C2-type domains lie at 56–138, 143–229, 245–333, 338–428, and 432–521; these read PYFK…SEVQ, GNFM…SPLI, PIIV…AFIS, PYFT…LDVT, and PAFI…VMLT. Cysteine 78 and cysteine 121 form a disulfide bridge. N-linked (GlcNAc...) asparagine glycosylation is found at asparagine 93, asparagine 223, and asparagine 253. 3 disulfides stabilise this stretch: cysteine 267–cysteine 314, cysteine 360–cysteine 410, and cysteine 453–cysteine 505. 3 N-linked (GlcNAc...) asparagine glycosylation sites follow: asparagine 502, asparagine 524, and asparagine 534. The Ig-like C2-type 6 domain occupies 525 to 615; that stretch reads RTFIVHPPEN…GNDSRMARLE (91 aa). A disulfide bridge connects residues cysteine 547 and cysteine 599. N-linked (GlcNAc...) asparagine glycosylation is found at asparagine 607, asparagine 631, asparagine 734, asparagine 773, asparagine 834, asparagine 967, and asparagine 977. Fibronectin type-III domains follow at residues 622–718, 723–819, 824–922, 926–1020, 1024–1123, 1128–1226, 1231–1328, 1332–1426, 1431–1528, 1533–1651, 1656–1752, 1756–1851, and 1854–1955; these read SPQN…LPEE, PPKN…TLQG, PPQN…TLED, AVGH…VPPE, APSN…TLQA, APGS…TRES, PPEN…TKDD, PPIR…TEKR, PPQQ…TLQD, PPSS…VGEA, APQN…THQA, APSF…AGPA, and SPGS…TEAP. Asparagine 1234 and asparagine 1285 each carry an N-linked (GlcNAc...) asparagine glycan. The segment at 1423–1443 is disordered; sequence TEKRERPAPPQQLTTPQSDVS. Over residues 1433–1443 the composition is skewed to polar residues; the sequence is QQLTTPQSDVS. Asparagine 1606, asparagine 1700, asparagine 1719, asparagine 1771, and asparagine 1845 each carry an N-linked (GlcNAc...) asparagine glycan. The chain crosses the membrane as a helical span at residues 1962 to 1982; sequence FLLVMALSSLILILLVVFALV. Residues 1983–2169 are Cytoplasmic-facing; sequence LHGQSKKYKN…TPVTGFSSFV (187 aa). Disordered stretches follow at residues 2028 to 2050 and 2145 to 2169; these read TFSK…HYSD and GGVY…SSFV. Over residues 2160-2169 the composition is skewed to polar residues; sequence TPVTGFSSFV. Positions 2163–2169 match the PDZ-binding motif; it reads TGFSSFV.

The protein belongs to the sidekick family. In terms of assembly, homodimer; mediates homophilic interactions to promote cell adhesion. Expressed by non-overlapping subsets of retinal neurons. SDK1, SDK2, DSCAM and DSCAML1 are expressed in non-overlapping subsets of interneurons and retinal ganglion cells (RGCs) that form synapses in distinct inner plexiform layer (IPL) sublaminae.

Its subcellular location is the cell membrane. It is found in the synapse. Functionally, adhesion molecule that promotes lamina-specific synaptic connections in the retina. Expressed in specific subsets of interneurons and retinal ganglion cells (RGCs) and promotes synaptic connectivity via homophilic interactions. The polypeptide is Protein sidekick-1 (Gallus gallus (Chicken)).